A 327-amino-acid polypeptide reads, in one-letter code: MFNDIPVFDYEDIQLIPNKCIISSRSQADTSVKLGNYTFKLPVIPANMQTIIDEEVAETLACEGYFYIMHRFNEEARRPFIKRMHDKGLIASISVGVKDYEYDFVTSLKEDAPEFITIDIAHGHSNSVIEMIQHIKQELPETFVIAGNVGTPEAVRELENAGADATKVGIGPGKVCITKVKTGFGTGGWQLAALRWCSKAARKPIIADGGIRTHGDIAKSIRFGASMVMIGSLFAGHLESPGKLVEVDGQQFKEYYGSASEYQKGEHKNVEGKKILLPVKGRLEDTLTEMQQDLQSSISYAGGKELDSLRHVDYVIVKNSIWNGDSI.

C176 (thioimidate intermediate) is an active-site residue. 205 to 228 lines the NADP(+) pocket; it reads IIADGGIRTHGDIAKSIRFGASMV.

This sequence belongs to the IMPDH/GMPR family. GuaC type 2 subfamily.

The enzyme catalyses IMP + NH4(+) + NADP(+) = GMP + NADPH + 2 H(+). Catalyzes the irreversible NADPH-dependent deamination of GMP to IMP. It functions in the conversion of nucleobase, nucleoside and nucleotide derivatives of G to A nucleotides, and in maintaining the intracellular balance of A and G nucleotides. The chain is GMP reductase from Streptococcus agalactiae serotype Ia (strain ATCC 27591 / A909 / CDC SS700).